Reading from the N-terminus, the 291-residue chain is Phosphate import ATP-binding protein PstB (291 aa).

Positions 45–286 (YSTQNLDLWY…PADKQTEDYI (242 aa)) constitute an ABC transporter domain. 77–84 (GPSGCGKS) is an ATP binding site.

This sequence belongs to the ABC transporter superfamily. Phosphate importer (TC 3.A.1.7) family. As to quaternary structure, the complex is composed of two ATP-binding proteins (PstB), two transmembrane proteins (PstC and PstA) and a solute-binding protein (PstS).

The protein localises to the cell membrane. It carries out the reaction phosphate(out) + ATP + H2O = ADP + 2 phosphate(in) + H(+). In terms of biological role, part of the ABC transporter complex PstSACB involved in phosphate import. Responsible for energy coupling to the transport system. This Staphylococcus epidermidis (strain ATCC 12228 / FDA PCI 1200) protein is Phosphate import ATP-binding protein PstB.